We begin with the raw amino-acid sequence, 358 residues long: GTPase Obg (358 aa).

Residues M1 to I158 form the Obg domain. The OBG-type G domain maps to A159 to R355. GTP contacts are provided by residues G165–S172, F190–I194, D212–G215, S280–D283, and S336–A338. Residues S172 and T192 each contribute to the Mg(2+) site.

The protein belongs to the TRAFAC class OBG-HflX-like GTPase superfamily. OBG GTPase family. As to quaternary structure, monomer. Mg(2+) serves as cofactor.

It localises to the cytoplasm. Functionally, an essential GTPase which binds GTP, GDP and possibly (p)ppGpp with moderate affinity, with high nucleotide exchange rates and a fairly low GTP hydrolysis rate. Plays a role in control of the cell cycle, stress response, ribosome biogenesis and in those bacteria that undergo differentiation, in morphogenesis control. This Wolinella succinogenes (strain ATCC 29543 / DSM 1740 / CCUG 13145 / JCM 31913 / LMG 7466 / NCTC 11488 / FDC 602W) (Vibrio succinogenes) protein is GTPase Obg.